A 354-amino-acid chain; its full sequence is Large ribosomal subunit protein uL10 (354 aa).

Acidic residues-rich tracts occupy residues 286–296 (DEEALPEELQD) and 307–345 (AEADDEDDTGNVEQTDESDADDADDADDADDADEEDGDG). A disordered region spans residues 286-354 (DEEALPEELQ…GGDALGDMFG (69 aa)).

Belongs to the universal ribosomal protein uL10 family. Part of the 50S ribosomal subunit. Forms part of the ribosomal stalk which helps the ribosome interact with GTP-bound translation factors. Forms a heptameric L10(L12)2(L12)2(L12)2 complex, where L10 forms an elongated spine to which the L12 dimers bind in a sequential fashion.

Functionally, forms part of the ribosomal stalk, playing a central role in the interaction of the ribosome with GTP-bound translation factors. The chain is Large ribosomal subunit protein uL10 from Natronomonas pharaonis (strain ATCC 35678 / DSM 2160 / CIP 103997 / JCM 8858 / NBRC 14720 / NCIMB 2260 / Gabara) (Halobacterium pharaonis).